We begin with the raw amino-acid sequence, 488 residues long: Glutamyl-tRNA(Gln) amidotransferase subunit A (488 aa).

Catalysis depends on charge relay system residues Lys-77 and Ser-152. The active-site Acyl-ester intermediate is the Ser-176.

It belongs to the amidase family. GatA subfamily. As to quaternary structure, heterotrimer of A, B and C subunits.

The catalysed reaction is L-glutamyl-tRNA(Gln) + L-glutamine + ATP + H2O = L-glutaminyl-tRNA(Gln) + L-glutamate + ADP + phosphate + H(+). Functionally, allows the formation of correctly charged Gln-tRNA(Gln) through the transamidation of misacylated Glu-tRNA(Gln) in organisms which lack glutaminyl-tRNA synthetase. The reaction takes place in the presence of glutamine and ATP through an activated gamma-phospho-Glu-tRNA(Gln). The chain is Glutamyl-tRNA(Gln) amidotransferase subunit A from Streptococcus agalactiae serotype Ia (strain ATCC 27591 / A909 / CDC SS700).